A 256-amino-acid polypeptide reads, in one-letter code: Omega-amidase YafV (256 aa).

The region spanning 4–234 (LKITLLQQPL…ATRIDAELSM (231 aa)) is the CN hydrolase domain. E42 acts as the Proton acceptor in catalysis. K107 functions as the Proton donor in the catalytic mechanism. C141 (nucleophile) is an active-site residue.

This sequence belongs to the carbon-nitrogen hydrolase superfamily. NIT1/NIT2 family.

It carries out the reaction a monoamide of a dicarboxylate + H2O = a dicarboxylate + NH4(+). In terms of biological role, hydrolyzes alpha-ketoglutaramate (a-KGM) to alpha-ketoglutarate (alpha-KG) and ammonia, has weak activity on L-glutamine, almost no activity on deaminated glutathione (dGSH) and none on glutathione. May function as a metabolite repair enzyme. This chain is Omega-amidase YafV (yafV), found in Escherichia coli (strain K12).